The following is a 1241-amino-acid chain: ATP-dependent helicase/nuclease subunit A (1241 aa).

Residues 12–485 (SQWTDDQWKA…IDLAKNFRSR (474 aa)) form the UvrD-like helicase ATP-binding domain. Residue 33 to 40 (AAAGSGKT) participates in ATP binding. The UvrD-like helicase C-terminal domain occupies 505–805 (GEIDYDADAE…RIMTIHKSKG (301 aa)).

This sequence belongs to the helicase family. AddA subfamily. Heterodimer of AddA and AddB/RexB. It depends on Mg(2+) as a cofactor.

The catalysed reaction is Couples ATP hydrolysis with the unwinding of duplex DNA by translocating in the 3'-5' direction.. It catalyses the reaction ATP + H2O = ADP + phosphate + H(+). In terms of biological role, the heterodimer acts as both an ATP-dependent DNA helicase and an ATP-dependent, dual-direction single-stranded exonuclease. Recognizes the chi site generating a DNA molecule suitable for the initiation of homologous recombination. The AddA nuclease domain is required for chi fragment generation; this subunit has the helicase and 3' -&gt; 5' nuclease activities. This is ATP-dependent helicase/nuclease subunit A from Bacillus cereus (strain ATCC 14579 / DSM 31 / CCUG 7414 / JCM 2152 / NBRC 15305 / NCIMB 9373 / NCTC 2599 / NRRL B-3711).